We begin with the raw amino-acid sequence, 457 residues long: MLKSFRGGVHPDDSKKYTANKPIEIAPIPDKVFIPVRQHIGAPTSPVVQKGDEVKKGQLIAKSDAFVSANIYASTSGKVVDIGDYPHPGFGKCQAIVIEKDGKDEWVEGIPTSRNWKELSVKEMLGIIREAGIVGMGGATFPVHVKLAPPPDKKVDVFILNGAECEPYLTADYRSMLENSDKVVAGVQIIMKILNVEKAFVGIEDNKPKAIEAMKKAFEGTKVQVVGLPTKYPQGAEKMLINVLTGREVPSGGLPADVGAVVQNVGTCIAISDAVERGIPLIQRVTTISGGAIKEPKNILVRIGTTFKDAIDFCGGFKEEPVKIISGGPMMGFAQSNLDIPIMKGSSGILGLTKNDVNDGKESSCIRCGRCLKACPMHLNPSMLSILGQKDLYQEAKEEYNLLDCVECGSCVYTCPAKRKIVQYIRYLKSENRAAGEREKAKAAKAKEKKEKEEVLK.

2 4Fe-4S ferredoxin-type domains span residues 353 to 386 and 396 to 427; these read TKND…MLSI and AKEE…YIRY. Residues cysteine 365, cysteine 368, cysteine 371, cysteine 375, cysteine 405, cysteine 408, cysteine 411, and cysteine 415 each coordinate [4Fe-4S] cluster. The disordered stretch occupies residues 433–457; it reads RAAGEREKAKAAKAKEKKEKEEVLK.

It belongs to the 4Fe4S bacterial-type ferredoxin family. RnfC subfamily. The complex is composed of six subunits: RnfA, RnfB, RnfC, RnfD, RnfE and RnfG. It depends on [4Fe-4S] cluster as a cofactor.

The protein resides in the cell membrane. In terms of biological role, part of a membrane-bound complex that couples electron transfer with translocation of ions across the membrane. Couples electron transfer from reduced ferredoxin to NAD(+) with translocation of H(+) out of the cell. Essential for energy conservation during autotrophic growth. Contributes to ATP synthesis during heterotrophic growth. The protein is Proton-translocating ferredoxin:NAD(+) oxidoreductase complex subunit C of Clostridium ljungdahlii (strain ATCC 55383 / DSM 13528 / PETC).